Consider the following 618-residue polypeptide: Zinc finger protein 48 (618 aa).

Position 1 is an N-acetylmethionine (methionine 1). Composition is skewed to basic and acidic residues over residues 1-22 and 39-51; these read MERAVEPWGPDLHRPEEREPQR and EFEHTPQEDDLGF. Disordered regions lie at residues 1–51 and 78–109; these read MERA…DLGF and LWVQREGLGKPQPRDRGPRLLGEPRWGQASSD. A Glycyl lysine isopeptide (Lys-Gly) (interchain with G-Cter in SUMO2) cross-link involves residue lysine 87. 2 consecutive C2H2-type zinc fingers follow at residues 112-134 and 140-162; these read AVCGECGKSFRQMSDLVKHQRTH and YKCGVCGKGFGDSSARIKHQRTH. Residues 157–189 form a disordered region; sequence KHQRTHSGEKPYRARPPAQGPPKIPRSRIPAGE. Lysine 179 participates in a covalent cross-link: Glycyl lysine isopeptide (Lys-Gly) (interchain with G-Cter in SUMO2). C2H2-type zinc fingers lie at residues 192 to 214 and 220 to 242; these read TICGECGKSFRQSSDLVKHQRTH and YKCGICGKGFGDSSARIKHQRTH. The segment at 235-271 is disordered; that stretch reads RIKHQRTHRGEQPPRPVVPRRQPSRAATAATQGPKAQ. Residue lysine 269 forms a Glycyl lysine isopeptide (Lys-Gly) (interchain with G-Cter in SUMO2) linkage. C2H2-type zinc fingers lie at residues 275–297 and 303–325; these read YICTDCGKRFVLSCSLLSHQRSH and FGCDVCGKEFARGSDLVKHLRVH. Residue lysine 329 forms a Glycyl lysine isopeptide (Lys-Gly) (interchain with G-Cter in SUMO2) linkage. 2 consecutive C2H2-type zinc fingers follow at residues 331 to 353 and 359 to 381; these read YLCPECGKGFADSSARVKHLRTH and HACPECDRTFSLSSTLLRHRLTH. Residues 392–414 show a composition bias toward pro residues; it reads YPLPALIPSPPPPPLGTSPPLTP. A disordered region spans residues 392–457; the sequence is YPLPALIPSP…DKPHKCPECG (66 aa). Residues 415-432 show a composition bias toward low complexity; that stretch reads RSPSHSGEPFGLPGLEPE. Residues 451–473 form a C2H2-type 9 zinc finger; that stretch reads HKCPECGKGFRRSSDLVKHHRVH. Lysine 477 participates in a covalent cross-link: Glycyl lysine isopeptide (Lys-Gly) (interchain with G-Cter in SUMO2). The C2H2-type 10 zinc finger occupies 479–501; sequence YLCPECGKGFADSSARVKHLRTH. Residues 500–540 are disordered; sequence THRGERARPPPPSTLLRPHNPPGPVPMAPRPRVRAQPSGPS. Positions 508–528 are enriched in pro residues; that stretch reads PPPPSTLLRPHNPPGPVPMAP. 2 consecutive C2H2-type zinc fingers follow at residues 543–565 and 571–593; these read HVCGFCGKEFPRSSDLVKHRRTH and YKCAECGKGFGDSSARIKHQRGH. A Glycyl lysine isopeptide (Lys-Gly) (interchain with G-Cter in SUMO2) cross-link involves residue lysine 610.

This sequence belongs to the krueppel C2H2-type zinc-finger protein family.

Its subcellular location is the nucleus. Functionally, may be involved in transcriptional regulation. The sequence is that of Zinc finger protein 48 (ZNF48) from Homo sapiens (Human).